Here is a 159-residue protein sequence, read N- to C-terminus: Phosphopantetheine adenylyltransferase (159 aa).

Thr10 contacts substrate. ATP contacts are provided by residues 10 to 11 (TF) and His18. Substrate contacts are provided by Lys42, Met74, and Arg88. ATP-binding positions include 89-91 (GLR), Glu99, and 124-130 (WSFISSS).

This sequence belongs to the bacterial CoaD family. Homohexamer. It depends on Mg(2+) as a cofactor.

Its subcellular location is the cytoplasm. The enzyme catalyses (R)-4'-phosphopantetheine + ATP + H(+) = 3'-dephospho-CoA + diphosphate. Its pathway is cofactor biosynthesis; coenzyme A biosynthesis; CoA from (R)-pantothenate: step 4/5. Reversibly transfers an adenylyl group from ATP to 4'-phosphopantetheine, yielding dephospho-CoA (dPCoA) and pyrophosphate. The sequence is that of Phosphopantetheine adenylyltransferase from Cronobacter sakazakii (strain ATCC BAA-894) (Enterobacter sakazakii).